Consider the following 296-residue polypeptide: POM121-like protein 12 (296 aa).

2 disordered regions span residues 1–54 (MGAA…SPWP) and 142–162 (APPERQESPWRSPGQRARPAG). Over residues 34–52 (SRSPSTPQTTPSPQGRQSP) the composition is skewed to low complexity.

The protein belongs to the POM121 family.

The chain is POM121-like protein 12 (POM121L12) from Homo sapiens (Human).